The chain runs to 277 residues: Phosphatidylglycerol--prolipoprotein diacylglyceryl transferase (277 aa).

Transmembrane regions (helical) follow at residues 15 to 35 (IHVR…TFMS), 50 to 70 (IDLL…YYVI), 89 to 109 (GGIA…VFCY), and 112 to 132 (FLPP…AQVL). Position 134 (Arg-134) interacts with a 1,2-diacyl-sn-glycero-3-phospho-(1'-sn-glycerol). 3 helical membrane-spanning segments follow: residues 174-194 (KPTF…ILSL), 204-224 (GEVF…VEGM), and 234-254 (VIRV…ILFV).

It belongs to the Lgt family.

Its subcellular location is the cell membrane. The catalysed reaction is L-cysteinyl-[prolipoprotein] + a 1,2-diacyl-sn-glycero-3-phospho-(1'-sn-glycerol) = an S-1,2-diacyl-sn-glyceryl-L-cysteinyl-[prolipoprotein] + sn-glycerol 1-phosphate + H(+). It participates in protein modification; lipoprotein biosynthesis (diacylglyceryl transfer). In terms of biological role, catalyzes the transfer of the diacylglyceryl group from phosphatidylglycerol to the sulfhydryl group of the N-terminal cysteine of a prolipoprotein, the first step in the formation of mature lipoproteins. The protein is Phosphatidylglycerol--prolipoprotein diacylglyceryl transferase of Lactobacillus delbrueckii subsp. bulgaricus (strain ATCC 11842 / DSM 20081 / BCRC 10696 / JCM 1002 / NBRC 13953 / NCIMB 11778 / NCTC 12712 / WDCM 00102 / Lb 14).